The sequence spans 1056 residues: Ribosomal protein S6 kinase delta-1 (1056 aa).

A PX domain is found at 8–132; the sequence is SADLARFYTV…DFFKGGVISD (125 aa). Residues 204–223 are disordered; it reads VGAVASDSEPSRVEDRESRS. Basic and acidic residues predominate over residues 212-222; sequence EPSRVEDRESR. An MIT domain is found at 276-304; the sequence is VQGESSPTRREAVKRRTAEYLMRAESICS. Residues S281, S422, S423, S426, S446, S448, and S454 each carry the phosphoserine modification. The region spanning 343-444 is the Protein kinase 1 domain; that stretch reads GVIDKVLLVM…SMPPRVCLQQ (102 aa). The segment at 426–504 is disordered; it reads SLDIKEGRPS…KWLDSGSSSE (79 aa). A compositionally biased stretch (low complexity) spans 443–454; sequence QQPSASPQGGSS. Over residues 473–482 the composition is skewed to polar residues; the sequence is TSLTPSSQDD. 2 positions are modified to phosphoserine: S493 and S527. Positions 529–588 are disordered; sequence SEESVMQPEGDKADTQAVSSPASLATGSVSPSTHLRVFSGGEDLEAVSSPPTSESLSRSK. Residues 544 to 561 show a composition bias toward polar residues; that stretch reads QAVSSPASLATGSVSPST. Positions 576–587 are enriched in low complexity; the sequence is SSPPTSESLSRS. A phosphoserine mark is found at S577, S599, S602, S634, S655, S658, S661, and S787. The tract at residues 628 to 662 is disordered; the sequence is TLEDGDSPSQSLDPGESKRESEAQDSVSRGSDDSV. The Protein kinase 2 domain maps to 789 to 1046; the sequence is RSESDRLGQV…VEDIKSHPFF (258 aa). Residues 795–803 and K823 contribute to the ATP site; that span reads LGQVEVVVT. D919 functions as the Proton acceptor in the catalytic mechanism.

It belongs to the protein kinase superfamily. Ser/Thr protein kinase family. S6 kinase subfamily. Interacts with SPHK1 and phosphatidylinositol 3-phosphate. Interacts (via PX domain) with PRDX3.

The protein resides in the cytoplasm. It is found in the membrane. The protein localises to the early endosome. The enzyme catalyses L-seryl-[protein] + ATP = O-phospho-L-seryl-[protein] + ADP + H(+). It carries out the reaction L-threonyl-[protein] + ATP = O-phospho-L-threonyl-[protein] + ADP + H(+). Its function is as follows. May be involved in transmitting sphingosine-1 phosphate (SPP)-mediated signaling into the cell. Plays a role in the recruitment of PRDX3 to early endosomes. The protein is Ribosomal protein S6 kinase delta-1 (Rps6kc1) of Mus musculus (Mouse).